We begin with the raw amino-acid sequence, 342 residues long: Trace amine-associated receptor 8 (342 aa).

Over 1 to 31 (MTSNFSQPVVQLCYEDVNGSCIETPYSPGSR) the chain is Extracellular. Residues asparagine 4 and asparagine 18 are each glycosylated (N-linked (GlcNAc...) asparagine). Disulfide bonds link cysteine 21–cysteine 185 and cysteine 104–cysteine 189. A helical membrane pass occupies residues 32–52 (VILYTAFSFGSLLAVFGNLLV). Residues 53–67 (MTSVLHFKQLHSPTN) are Cytoplasmic-facing. Residues 68–88 (FLIASLACADFLVGVTVMLFS) form a helical membrane-spanning segment. Topologically, residues 89 to 111 (MVRTVESCWYFGAKFCTLHSCCD) are extracellular. The chain crosses the membrane as a helical span at residues 112–132 (VAFCYSSVLHLCFICIDRYIV). Residues 133 to 146 (VTDPLVYATKFTVS) lie on the Cytoplasmic side of the membrane. A helical transmembrane segment spans residues 147–167 (VSGICISVSWILPLTYSGAVF). The Extracellular portion of the chain corresponds to 168–195 (YTGVNDDGLEELVSALNCVGGCQIIVSQ). A helical membrane pass occupies residues 196–216 (GWVLIDFLLFFIPTLVMIILY). Residues 217 to 258 (SKIFLIAKQQAIKIETTSSKVESSSESYKIRVAKRERKAAKT) lie on the Cytoplasmic side of the membrane. Residues 259 to 279 (LGVTVLAFVISWLPYTVDILI) traverse the membrane as a helical segment. Residue aspartate 280 is a topological domain, extracellular. Residues 281–301 (AFMGFLTPAYIYEICCWSAYY) traverse the membrane as a helical segment. Topologically, residues 302 to 342 (NSAMNPLIYALFYPWFRKAIKLILSGDVLKASSSTISLFLE) are cytoplasmic.

Belongs to the G-protein coupled receptor 1 family. In terms of tissue distribution, expressed in kidney and amygdala. Not expressed in other tissues or brain regions tested.

The protein localises to the cell membrane. Its function is as follows. Olfactory receptor specific for trace amines. Trace amine compounds are enriched in animal body fluids and act on trace amine-associated receptors (TAARs) to elicit both intraspecific and interspecific innate behaviors. Ligand-binding causes a conformation change that triggers signaling via G alpha proteins, possibly G(i)/G(o) G alpha proteins. The polypeptide is Trace amine-associated receptor 8 (TAAR8) (Homo sapiens (Human)).